The chain runs to 118 residues: Large ribosomal subunit protein bL19 (118 aa).

It belongs to the bacterial ribosomal protein bL19 family.

In terms of biological role, this protein is located at the 30S-50S ribosomal subunit interface and may play a role in the structure and function of the aminoacyl-tRNA binding site. The polypeptide is Large ribosomal subunit protein bL19 (Helicobacter hepaticus (strain ATCC 51449 / 3B1)).